The following is a 201-amino-acid chain: Recombination protein RecR (201 aa).

The C4-type zinc-finger motif lies at 57–72 (CKLCQIYTEQPLCNIC). The 96-residue stretch at 80–175 (TLLCVVESPA…KCSRIAHGVP (96 aa)) folds into the Toprim domain.

It belongs to the RecR family.

May play a role in DNA repair. It seems to be involved in an RecBC-independent recombinational process of DNA repair. It may act with RecF and RecO. The protein is Recombination protein RecR of Coxiella burnetii (strain RSA 493 / Nine Mile phase I).